The sequence spans 398 residues: 1-deoxy-D-xylulose 5-phosphate reductoisomerase (398 aa).

T10, G11, S12, I13, N38, and N124 together coordinate NADPH. K125 contributes to the 1-deoxy-D-xylulose 5-phosphate binding site. An NADPH-binding site is contributed by E126. D150 provides a ligand contact to Mn(2+). 1-deoxy-D-xylulose 5-phosphate contacts are provided by S151, E152, S176, and H199. E152 contributes to the Mn(2+) binding site. An NADPH-binding site is contributed by G205. 1-deoxy-D-xylulose 5-phosphate contacts are provided by S212, N217, K218, and E221. A Mn(2+)-binding site is contributed by E221.

The protein belongs to the DXR family. It depends on Mg(2+) as a cofactor. Mn(2+) is required as a cofactor.

The enzyme catalyses 2-C-methyl-D-erythritol 4-phosphate + NADP(+) = 1-deoxy-D-xylulose 5-phosphate + NADPH + H(+). Its pathway is isoprenoid biosynthesis; isopentenyl diphosphate biosynthesis via DXP pathway; isopentenyl diphosphate from 1-deoxy-D-xylulose 5-phosphate: step 1/6. In terms of biological role, catalyzes the NADPH-dependent rearrangement and reduction of 1-deoxy-D-xylulose-5-phosphate (DXP) to 2-C-methyl-D-erythritol 4-phosphate (MEP). The chain is 1-deoxy-D-xylulose 5-phosphate reductoisomerase from Rippkaea orientalis (strain PCC 8801 / RF-1) (Cyanothece sp. (strain PCC 8801)).